Reading from the N-terminus, the 147-residue chain is MKVILKEDVHGLGRAGQTINVKDGYARNYLLPRGLALIADEKNLKVLEYQKKKFEEQAKKKRQDAESIAERLSALELTIKAKAGEDQKLFGSITAKDIAELLQKEGFLVDKKQINISEPIKRVGEHEVEVKLLSNLSAKLKINVVAE.

Belongs to the bacterial ribosomal protein bL9 family.

In terms of biological role, binds to the 23S rRNA. The polypeptide is Large ribosomal subunit protein bL9 (Thermodesulfovibrio yellowstonii (strain ATCC 51303 / DSM 11347 / YP87)).